Reading from the N-terminus, the 178-residue chain is Ribose 1,5-bisphosphate phosphokinase PhnN (178 aa).

ATP is bound at residue 9–16; the sequence is GPSGSGKD.

Belongs to the ribose 1,5-bisphosphokinase family.

It carries out the reaction alpha-D-ribose 1,5-bisphosphate + ATP = 5-phospho-alpha-D-ribose 1-diphosphate + ADP. It participates in metabolic intermediate biosynthesis; 5-phospho-alpha-D-ribose 1-diphosphate biosynthesis; 5-phospho-alpha-D-ribose 1-diphosphate from D-ribose 5-phosphate (route II): step 3/3. Catalyzes the phosphorylation of ribose 1,5-bisphosphate to 5-phospho-D-ribosyl alpha-1-diphosphate (PRPP). The polypeptide is Ribose 1,5-bisphosphate phosphokinase PhnN (Pantoea vagans (strain C9-1) (Pantoea agglomerans (strain C9-1))).